Here is a 112-residue protein sequence, read N- to C-terminus: UstYa family oxidase VicYb (112 aa).

2 consecutive short sequence motifs (HXXHC) follow at residues 9–13 (HYLHC) and 36–40 (HLDHC).

It belongs to the ustYa family.

The protein operates within mycotoxin biosynthesis. Its function is as follows. UstYa family oxidase, part of the gene cluster that mediates the biosynthesis of the secondary metabolite victorin, the molecular basis for Victoria blight of oats. Within the pathway, vicYb catalyzes the oxidative cyclization of the core peptide. The pathway starts with the processing of the precursor vicA1 by several endopeptidases including kexin proteases as well as the cluster-specific S28 family peptidases vicPa and vicPb to produce 7 identical copies of the hexapeptide Gly-Leu-Lys-Leu-Ala-Phe. After being excised from the precursor peptide, the core peptides are cyclized and modified post-translationally by enzymes encoded within the gene cluster. The ustYa family oxidase vicYb is required for the formation of the macrocycle in victorin and the copper amine oxidases (CAOs) vicK1 and vicK2 are responsible for converting victorin to the active form by oxidizing the N-terminal glycyl residue in the peptides to glyoxylate. Relaxed substrate specificity of enzymes in the victorin biosynthetic pathway results in a metabolic grid that produces a set of analogs including victorinines B, C, E or HV-toxin M. The protein is UstYa family oxidase VicYb of Bipolaris victoriae (strain FI3) (Victoria blight of oats agent).